The primary structure comprises 457 residues: tRNA (guanine(37)-N(1))-methyltransferase (457 aa).

Residues histidine 225, 263–264 (DL), 291–292 (DG), and asparagine 358 each bind S-adenosyl-L-methionine.

The protein belongs to the class I-like SAM-binding methyltransferase superfamily. TRM5/TYW2 family. As to quaternary structure, monomer.

It localises to the mitochondrion matrix. Its subcellular location is the nucleus. The protein resides in the cytoplasm. It carries out the reaction guanosine(37) in tRNA + S-adenosyl-L-methionine = N(1)-methylguanosine(37) in tRNA + S-adenosyl-L-homocysteine + H(+). Specifically methylates the N1 position of guanosine-37 in various cytoplasmic and mitochondrial tRNAs. Methylation is not dependent on the nature of the nucleoside 5' of the target nucleoside. This is the first step in the biosynthesis of wybutosine (yW), a modified base adjacent to the anticodon of tRNAs and required for accurate decoding. The sequence is that of tRNA (guanine(37)-N(1))-methyltransferase from Coprinopsis cinerea (strain Okayama-7 / 130 / ATCC MYA-4618 / FGSC 9003) (Inky cap fungus).